We begin with the raw amino-acid sequence, 156 residues long: uncharacterized protein (156 aa).

Positions Val10 to Val156 constitute an N-acetyltransferase domain.

This sequence belongs to the acetyltransferase family.

This is an uncharacterized protein from Mycobacterium bovis (strain ATCC BAA-935 / AF2122/97).